Reading from the N-terminus, the 334-residue chain is Uracil-DNA glycosylase (334 aa).

Basic residues predominate over residues 1–17 (MKRACSRSPSPRRRPSS). Disordered stretches follow at residues 1-63 (MKRA…CRSS) and 79-104 (VTFS…AATS). The span at 40–50 (GASNDASTETR) shows a compositional bias: polar residues. Residue aspartate 178 is the Proton acceptor of the active site.

It belongs to the uracil-DNA glycosylase (UDG) superfamily. UNG family.

It localises to the host nucleus. The enzyme catalyses Hydrolyzes single-stranded DNA or mismatched double-stranded DNA and polynucleotides, releasing free uracil.. In terms of biological role, excises uracil residues from the DNA which can arise as a result of misincorporation of dUMP residues by DNA polymerase or deamination of cytosines. Therefore may reduce deleterious uracil incorporation into the viral genome, particularly in terminally differentiated cells which lack DNA repair enzymes. The protein is Uracil-DNA glycosylase of Human herpesvirus 1 (strain 17) (HHV-1).